The chain runs to 194 residues: Peptidyl-tRNA hydrolase (194 aa).

Tyrosine 16 contacts tRNA. Histidine 21 (proton acceptor) is an active-site residue. TRNA is bound by residues phenylalanine 67, asparagine 69, and asparagine 115.

This sequence belongs to the PTH family. Monomer.

It is found in the cytoplasm. The catalysed reaction is an N-acyl-L-alpha-aminoacyl-tRNA + H2O = an N-acyl-L-amino acid + a tRNA + H(+). Hydrolyzes ribosome-free peptidyl-tRNAs (with 1 or more amino acids incorporated), which drop off the ribosome during protein synthesis, or as a result of ribosome stalling. Functionally, catalyzes the release of premature peptidyl moieties from peptidyl-tRNA molecules trapped in stalled 50S ribosomal subunits, and thus maintains levels of free tRNAs and 50S ribosomes. The polypeptide is Peptidyl-tRNA hydrolase (Shigella flexneri).